A 339-amino-acid chain; its full sequence is Anthranilate phosphoribosyltransferase (339 aa).

Residues Gly-81, 84 to 85 (GD), Ser-89, 91 to 94 (NVSS), 109 to 117 (KHGNRALSS), and Ala-121 contribute to the 5-phospho-alpha-D-ribose 1-diphosphate site. Gly-81 contacts anthranilate. Residue Ser-93 participates in Mg(2+) binding. Asn-112 provides a ligand contact to anthranilate. Arg-167 provides a ligand contact to anthranilate. Mg(2+) is bound by residues Asp-225 and Glu-226.

The protein belongs to the anthranilate phosphoribosyltransferase family. Homodimer. The cofactor is Mg(2+).

The catalysed reaction is N-(5-phospho-beta-D-ribosyl)anthranilate + diphosphate = 5-phospho-alpha-D-ribose 1-diphosphate + anthranilate. It functions in the pathway amino-acid biosynthesis; L-tryptophan biosynthesis; L-tryptophan from chorismate: step 2/5. Its function is as follows. Catalyzes the transfer of the phosphoribosyl group of 5-phosphorylribose-1-pyrophosphate (PRPP) to anthranilate to yield N-(5'-phosphoribosyl)-anthranilate (PRA). In Brucella ovis (strain ATCC 25840 / 63/290 / NCTC 10512), this protein is Anthranilate phosphoribosyltransferase.